The following is a 545-amino-acid chain: Eukaryotic translation initiation factor 3 subunit D-2 (545 aa).

Basic residues predominate over residues 99–113 (FRGNIRNNPRTRGRT). Residues 99–158 (FRGNIRNNPRTRGRTGRGGAVTGIGGNQPGVGVNERTKYGKGRDNRRQMGRRFGRNAPTR) form a disordered region. A compositionally biased stretch (gly residues) spans 114-127 (GRGGAVTGIGGNQP). A compositionally biased stretch (basic and acidic residues) spans 133–145 (ERTKYGKGRDNRR). The interval 287–301 (QFDLLTVNETALEPP) is RNA gate.

This sequence belongs to the eIF-3 subunit D family. Component of the eukaryotic translation initiation factor 3 (eIF-3) complex. The eIF-3 complex interacts with pix.

The protein localises to the cytoplasm. Functionally, mRNA cap-binding component of the eukaryotic translation initiation factor 3 (eIF-3) complex, which is involved in protein synthesis of a specialized repertoire of mRNAs and, together with other initiation factors, stimulates binding of mRNA and methionyl-tRNAi to the 40S ribosome. The eIF-3 complex specifically targets and initiates translation of a subset of mRNAs involved in cell proliferation. In the eIF-3 complex, eif3d specifically recognizes and binds the 7-methylguanosine cap of a subset of mRNAs. The chain is Eukaryotic translation initiation factor 3 subunit D-2 from Drosophila persimilis (Fruit fly).